A 124-amino-acid chain; its full sequence is Fluoride-specific ion channel FluC (124 aa).

A run of 4 helical transmembrane segments spans residues 4 to 24, 32 to 52, 68 to 88, and 101 to 121; these read ILAI…LAGG, AFPW…GLIM, GLTI…YETF, and LNVL…IMAA. Residues Gly75 and Thr78 each coordinate Na(+).

This sequence belongs to the fluoride channel Fluc/FEX (TC 1.A.43) family.

The protein localises to the cell inner membrane. The enzyme catalyses fluoride(in) = fluoride(out). Na(+) is not transported, but it plays an essential structural role and its presence is essential for fluoride channel function. Functionally, fluoride-specific ion channel. Important for reducing fluoride concentration in the cell, thus reducing its toxicity. The protein is Fluoride-specific ion channel FluC of Geobacter sulfurreducens (strain ATCC 51573 / DSM 12127 / PCA).